A 272-amino-acid chain; its full sequence is MEIYAVFGNPIAHSKSPFIHQQFAQQLDIVHPYGRVLAPINNFINTLDAFFAAGGKGANITVPFKEEAFARSDELTERASLAGAVNTLKRLEDGRLLGDNTDGIGLLSDLERLNFIRPGLRILLIGAGGASRGVLLPLLSLDCAVTITNRTASRAEALAKIFAHTGSVHATDMDKLDGCEFDLIINATSSGIRGEIPAIPASLIHPSLCCYDMFYQKGNTPFLSWCVQQGAKRYADGLGMLVGQAAHAVLLWHGVLPQVEPVIELLQQELLA.

Residues 14–16 (SKS) and Thr61 contribute to the shikimate site. The Proton acceptor role is filled by Lys65. Position 77 (Glu77) interacts with NADP(+). Asn86 and Asp102 together coordinate shikimate. Residues 126-130 (GAGGA), 149-154 (NRTASR), and Met213 each bind NADP(+). Position 215 (Tyr215) interacts with shikimate. Gly237 is a binding site for NADP(+).

It belongs to the shikimate dehydrogenase family. As to quaternary structure, homodimer.

It carries out the reaction shikimate + NADP(+) = 3-dehydroshikimate + NADPH + H(+). It functions in the pathway metabolic intermediate biosynthesis; chorismate biosynthesis; chorismate from D-erythrose 4-phosphate and phosphoenolpyruvate: step 4/7. Functionally, involved in the biosynthesis of the chorismate, which leads to the biosynthesis of aromatic amino acids. Catalyzes the reversible NADPH linked reduction of 3-dehydroshikimate (DHSA) to yield shikimate (SA). In Salmonella paratyphi A (strain ATCC 9150 / SARB42), this protein is Shikimate dehydrogenase (NADP(+)).